The sequence spans 378 residues: Apolipoprotein A-IV (378 aa).

The signal sequence occupies residues 1-20 (MFLKAVVLTLSLVAITGARA). 13 tandem repeats follow at residues 33-54 (DYFS…QSEL), 60-81 (SVTK…RNSW), 82-98 (EHSR…RQVG), 110-130 (PNCD…QAVG), 131-152 (PYAE…NQLT), 153-174 (SHAQ…SSLT), 175-196 (PFAD…GHLT), 197-218 (PYTD…RSLA), 219-240 (PYAQ…FQMK), 241-262 (KNAE…QRLA), 263-280 (PVAE…AGLH), 281-302 (KSLA…RNVG), and 303-324 (PYGE…QKLG). A 13 X 22 AA approximate tandem repeats region spans residues 33-324 (DYFSQLSNNA…QVEELRQKLG (292 aa)). The interval 354–378 (EKESQDTPVALPKQEQEQSAVPLES) is disordered.

Belongs to the apolipoprotein A1/A4/E family. Homodimer.

It localises to the secreted. Its function is as follows. May have a role in chylomicrons and VLDL secretion and catabolism. Required for efficient activation of lipoprotein lipase by ApoC-II; potent activator of LCAT. Apoa-IV is a major component of HDL and chylomicrons. The polypeptide is Apolipoprotein A-IV (Canis lupus familiaris (Dog)).